A 151-amino-acid polypeptide reads, in one-letter code: Small ribosomal subunit protein bS6 (151 aa).

Residues 96–151 (HEEGQSAMLTRRDDRRERDGDDRPRRREGGFDRGDRGDRGDRGPRRPRDNEAGEGA) form a disordered region.

It belongs to the bacterial ribosomal protein bS6 family.

Its function is as follows. Binds together with bS18 to 16S ribosomal RNA. This chain is Small ribosomal subunit protein bS6, found in Brucella anthropi (strain ATCC 49188 / DSM 6882 / CCUG 24695 / JCM 21032 / LMG 3331 / NBRC 15819 / NCTC 12168 / Alc 37) (Ochrobactrum anthropi).